The sequence spans 335 residues: Nucleoid-associated protein KPK_1538 (335 aa).

This sequence belongs to the YejK family.

It localises to the cytoplasm. It is found in the nucleoid. In Klebsiella pneumoniae (strain 342), this protein is Nucleoid-associated protein KPK_1538.